Here is a 57-residue protein sequence, read N- to C-terminus: Mambalgin-3 (57 aa).

Cystine bridges form between Cys-3-Cys-19, Cys-12-Cys-37, Cys-41-Cys-49, and Cys-50-Cys-55.

Belongs to the three-finger toxin family. Short-chain subfamily. Mambalgin sub-subfamily. Expressed by the venom gland.

The protein localises to the secreted. Functionally, this three-finger toxin inhibits ASIC channels. It acts as a gating modifier toxin by decreasing the apparent proton sensitivity of activation and by slightly increasing the apparent proton sensitivity for inactivation. It binds more tightly to the closed state and to a much lesser extent the inactivated/desensitized state of ASIC1a. It interacts directly with the outside surface of the thumb domain of chicken ASIC1a (ASIC1a), but does not insert into the acidic pocket as suggested previously. This binding leads to relocation of the thumb domain that could disrupt the acidic pocket of cASIC1a. The peptide exerts both stimulatory and inhibitory effects on ASIC1a. It reversibly inhibits rASIC1a (IC(50)=17 nM), rASIC1b (IC(50)= 44 nM) and rASIC1a-rASIC2a (IC(50)=252 nM) channels. In vivo, it shows a potent naloxone-resistant analgesic effect against acute and inflammatory pain upon central and peripheral injection. In addition, it also has an opioid-independent effect on both thermal and mechanical inflammatory pain after systemic administration and is effective against neuropathic pain. The chain is Mambalgin-3 from Dendroaspis angusticeps (Eastern green mamba).